The following is a 315-amino-acid chain: 4-hydroxy-3-methylbut-2-enyl diphosphate reductase (315 aa).

Cys-12 contacts [4Fe-4S] cluster. (2E)-4-hydroxy-3-methylbut-2-enyl diphosphate-binding residues include His-41 and His-74. The dimethylallyl diphosphate site is built by His-41 and His-74. Residues His-41 and His-74 each coordinate isopentenyl diphosphate. Cys-96 serves as a coordination point for [4Fe-4S] cluster. His-124 contacts (2E)-4-hydroxy-3-methylbut-2-enyl diphosphate. Position 124 (His-124) interacts with dimethylallyl diphosphate. Position 124 (His-124) interacts with isopentenyl diphosphate. Catalysis depends on Glu-126, which acts as the Proton donor. Thr-168 contributes to the (2E)-4-hydroxy-3-methylbut-2-enyl diphosphate binding site. Cys-198 is a binding site for [4Fe-4S] cluster. 4 residues coordinate (2E)-4-hydroxy-3-methylbut-2-enyl diphosphate: Ser-226, Ser-227, Asn-228, and Ser-270. The dimethylallyl diphosphate site is built by Ser-226, Ser-227, Asn-228, and Ser-270. 4 residues coordinate isopentenyl diphosphate: Ser-226, Ser-227, Asn-228, and Ser-270.

The protein belongs to the IspH family. The cofactor is [4Fe-4S] cluster.

It carries out the reaction isopentenyl diphosphate + 2 oxidized [2Fe-2S]-[ferredoxin] + H2O = (2E)-4-hydroxy-3-methylbut-2-enyl diphosphate + 2 reduced [2Fe-2S]-[ferredoxin] + 2 H(+). The enzyme catalyses dimethylallyl diphosphate + 2 oxidized [2Fe-2S]-[ferredoxin] + H2O = (2E)-4-hydroxy-3-methylbut-2-enyl diphosphate + 2 reduced [2Fe-2S]-[ferredoxin] + 2 H(+). It functions in the pathway isoprenoid biosynthesis; dimethylallyl diphosphate biosynthesis; dimethylallyl diphosphate from (2E)-4-hydroxy-3-methylbutenyl diphosphate: step 1/1. The protein operates within isoprenoid biosynthesis; isopentenyl diphosphate biosynthesis via DXP pathway; isopentenyl diphosphate from 1-deoxy-D-xylulose 5-phosphate: step 6/6. Its function is as follows. Catalyzes the conversion of 1-hydroxy-2-methyl-2-(E)-butenyl 4-diphosphate (HMBPP) into a mixture of isopentenyl diphosphate (IPP) and dimethylallyl diphosphate (DMAPP). Acts in the terminal step of the DOXP/MEP pathway for isoprenoid precursor biosynthesis. The chain is 4-hydroxy-3-methylbut-2-enyl diphosphate reductase from Pseudomonas fluorescens (strain SBW25).